The chain runs to 107 residues: Nucleoid-associated protein Mmar10_0436 (107 aa).

Belongs to the YbaB/EbfC family. Homodimer.

It is found in the cytoplasm. The protein resides in the nucleoid. Its function is as follows. Binds to DNA and alters its conformation. May be involved in regulation of gene expression, nucleoid organization and DNA protection. This chain is Nucleoid-associated protein Mmar10_0436, found in Maricaulis maris (strain MCS10) (Caulobacter maris).